The following is a 308-amino-acid chain: Glutaminase 1 (308 aa).

7 residues coordinate substrate: S64, N116, E161, N168, Y192, Y244, and V262.

This sequence belongs to the glutaminase family. As to quaternary structure, homotetramer.

It carries out the reaction L-glutamine + H2O = L-glutamate + NH4(+). This Halalkalibacterium halodurans (strain ATCC BAA-125 / DSM 18197 / FERM 7344 / JCM 9153 / C-125) (Bacillus halodurans) protein is Glutaminase 1.